The chain runs to 373 residues: 3-isopropylmalate dehydrogenase (373 aa).

An NAD(+)-binding site is contributed by 82–93 (GPKWGTGALRPE). Substrate-binding residues include Arg-100, Arg-110, Arg-139, and Asp-231. Residues Asp-231, Asp-256, and Asp-260 each coordinate Mg(2+). 295-306 (GSAPDLPANKVN) contributes to the NAD(+) binding site.

It belongs to the isocitrate and isopropylmalate dehydrogenases family. In terms of assembly, homodimer. Requires Mg(2+) as cofactor. Mn(2+) is required as a cofactor.

It is found in the cytoplasm. It carries out the reaction (2R,3S)-3-isopropylmalate + NAD(+) = 4-methyl-2-oxopentanoate + CO2 + NADH. It participates in amino-acid biosynthesis; L-leucine biosynthesis; L-leucine from 3-methyl-2-oxobutanoate: step 3/4. Functionally, catalyzes the oxidation of 3-carboxy-2-hydroxy-4-methylpentanoate (3-isopropylmalate) to 3-carboxy-4-methyl-2-oxopentanoate. The product decarboxylates to 4-methyl-2 oxopentanoate. This is 3-isopropylmalate dehydrogenase (LEU2) from Candida maltosa (Yeast).